A 239-amino-acid polypeptide reads, in one-letter code: MFPLLLVAELVVLSLVTSVKSQETDPLHGSKDQPLFRGADRNDFAIVVSPGAIECFWQFADQMGYLYFSYEVQRILGMSHDRHIVATAHTPQGFLIDTSQDVRGQINFATQETGFYQLCLKNEQNRFSSIQVYLNFGVFYEGPEVDHKQSQRKQLNDTLDAIKDSTQRVENQVFHMWRFYNYARMRKVADFFLLQSNYTYVNWWSTAQSLAIVLSGALQLYFLKRLFTASTTDTKKPRC.

A signal peptide spans 1–21; sequence MFPLLLVAELVVLSLVTSVKS. The Lumenal segment spans residues 22-200; it reads QETDPLHGSK…FFLLQSNYTY (179 aa). Positions 53 to 138 constitute a GOLD domain; that stretch reads IECFWQFADQ…SIQVYLNFGV (86 aa). 2 N-linked (GlcNAc...) asparagine glycosylation sites follow: Asn156 and Asn197. A helical transmembrane segment spans residues 201-223; that stretch reads VNWWSTAQSLAIVLSGALQLYFL. At 224–239 the chain is on the cytoplasmic side; that stretch reads KRLFTASTTDTKKPRC.

It belongs to the EMP24/GP25L family.

The protein localises to the endoplasmic reticulum membrane. The chain is Transmembrane emp24 domain-containing protein 6 (Tmed6) from Mus musculus (Mouse).